Reading from the N-terminus, the 312-residue chain is Ribosomal RNA small subunit methyltransferase H (312 aa).

Residues 33-35 (GGY), Asp51, Phe78, Asp97, and Gln104 contribute to the S-adenosyl-L-methionine site.

It belongs to the methyltransferase superfamily. RsmH family.

It localises to the cytoplasm. It catalyses the reaction cytidine(1402) in 16S rRNA + S-adenosyl-L-methionine = N(4)-methylcytidine(1402) in 16S rRNA + S-adenosyl-L-homocysteine + H(+). Specifically methylates the N4 position of cytidine in position 1402 (C1402) of 16S rRNA. The protein is Ribosomal RNA small subunit methyltransferase H of Orientia tsutsugamushi (strain Boryong) (Rickettsia tsutsugamushi).